The chain runs to 409 residues: Evolutionarily conserved signaling intermediate in Toll pathway, mitochondrial (409 aa).

A mitochondrion-targeting transit peptide spans 1–26 (MLRRAQCLLRLHGNGGHSLVSRFRNY). Disordered regions lie at residues 27-53 (ATDEGNPKQNPNPNPRAQKPGTKNLPA) and 383-409 (EEIEGGASVPATSDNSSQDEHISSRQK). The segment covering 400–409 (QDEHISSRQK) has biased composition (basic and acidic residues).

The protein belongs to the ECSIT family. As to quaternary structure, interacts with Traf6. Associates with mitochondrial complex I assembly intermediates during its biogenesis.

The protein resides in the cytoplasm. The protein localises to the nucleus. Its subcellular location is the mitochondrion. Its function is as follows. As part of the MCIA complex, involved in the assembly of the mitochondrial complex I. Involved in the innate immune response; promotes the production of antibacterial peptides. This chain is Evolutionarily conserved signaling intermediate in Toll pathway, mitochondrial, found in Drosophila melanogaster (Fruit fly).